A 369-amino-acid chain; its full sequence is tRNA-specific 2-thiouridylase MnmA (369 aa).

Residues 7 to 14 and M33 each bind ATP; that span reads GISGGVDS. The interval 93-95 is interaction with target base in tRNA; that stretch reads NPD. C98 acts as the Nucleophile in catalysis. A disulfide bridge connects residues C98 and C195. ATP is bound at residue G123. The interval 145 to 147 is interaction with tRNA; the sequence is KDQ. The Cysteine persulfide intermediate role is filled by C195. Positions 307–308 are interaction with tRNA; the sequence is RY.

Belongs to the MnmA/TRMU family. Interacts with TusE.

Its subcellular location is the cytoplasm. It catalyses the reaction S-sulfanyl-L-cysteinyl-[protein] + uridine(34) in tRNA + AH2 + ATP = 2-thiouridine(34) in tRNA + L-cysteinyl-[protein] + A + AMP + diphosphate + H(+). Its function is as follows. Catalyzes the 2-thiolation of uridine at the wobble position (U34) of tRNA(Lys), tRNA(Glu) and tRNA(Gln), leading to the formation of s(2)U34, the first step of tRNA-mnm(5)s(2)U34 synthesis. Sulfur is provided by IscS, via a sulfur-relay system. Binds ATP and its substrate tRNAs. The polypeptide is tRNA-specific 2-thiouridylase MnmA (Blochmanniella floridana).